We begin with the raw amino-acid sequence, 452 residues long: Trigger factor (452 aa).

In terms of domain architecture, PPIase FKBP-type spans 169–254 (GDQLLIDFVG…VQEVRAPVDG (86 aa)).

This sequence belongs to the FKBP-type PPIase family. Tig subfamily.

The protein resides in the cytoplasm. The catalysed reaction is [protein]-peptidylproline (omega=180) = [protein]-peptidylproline (omega=0). Its function is as follows. Involved in protein export. Acts as a chaperone by maintaining the newly synthesized protein in an open conformation. Functions as a peptidyl-prolyl cis-trans isomerase. The sequence is that of Trigger factor (tig) from Caulobacter vibrioides (strain ATCC 19089 / CIP 103742 / CB 15) (Caulobacter crescentus).